A 181-amino-acid polypeptide reads, in one-letter code: SecB-like chaperone MT2006 (181 aa).

Belongs to the SecB-like family. As to quaternary structure, homotetramer, interacts with antitoxin HigA1.

In terms of biological role, chaperone component of an atypical, type II toxin-antitoxin chaperone (TAC) module, probably required for antitoxin HigA1 to neutralize its cognate toxin HigB1. In Mycobacterium tuberculosis (strain CDC 1551 / Oshkosh), this protein is SecB-like chaperone MT2006 (secBL).